A 293-amino-acid chain; its full sequence is Cep170-like protein (293 aa).

Disordered regions lie at residues 78-110 and 217-270; these read PPLV…LTIT and FPSA…AESE. Positions 227–245 are enriched in polar residues; the sequence is KQKSSPVNNHHSPGQTPTL.

Belongs to the CEP170 family.

The protein is Cep170-like protein (CEP170P1) of Homo sapiens (Human).